A 428-amino-acid polypeptide reads, in one-letter code: Arabinosyltransferase RRA2 (428 aa).

The Cytoplasmic segment spans residues 1 to 15 (MAGRRDRIQQLRGSR). The helical; Signal-anchor for type II membrane protein transmembrane segment at 16–36 (IAIAIFVGILIGCVCSVLFPN) threads the bilayer. The Lumenal portion of the chain corresponds to 37-428 (GFFNSGSSLI…ALDSFPDGSD (392 aa)). Positions 250–252 (DVD) match the DXD motif motif. Residue Asn278 is glycosylated (N-linked (GlcNAc...) asparagine).

The protein belongs to the glycosyltransferase 77 family. Expressed in roots, rosette and cauline leaves, stems, flowers and siliques.

The protein localises to the golgi apparatus membrane. Its function is as follows. Plays a role in the arabinosylation of cell wall components. Involved in the arabinosylation of extensin proteins in root hair cells. Extensins are structural glycoproteins present in cell walls and its arabinosylation is important for root hair cell development. This is Arabinosyltransferase RRA2 from Arabidopsis thaliana (Mouse-ear cress).